A 134-amino-acid chain; its full sequence is Holo-[acyl-carrier-protein] synthase (134 aa).

The Mg(2+) site is built by aspartate 8 and glutamate 57.

This sequence belongs to the P-Pant transferase superfamily. AcpS family. Mg(2+) serves as cofactor.

The protein resides in the cytoplasm. It catalyses the reaction apo-[ACP] + CoA = holo-[ACP] + adenosine 3',5'-bisphosphate + H(+). In terms of biological role, transfers the 4'-phosphopantetheine moiety from coenzyme A to a Ser of acyl-carrier-protein. The chain is Holo-[acyl-carrier-protein] synthase from Rhizobium etli (strain ATCC 51251 / DSM 11541 / JCM 21823 / NBRC 15573 / CFN 42).